Here is a 140-residue protein sequence, read N- to C-terminus: Low calcium response locus protein T (140 aa).

The sequence is that of Low calcium response locus protein T (lcrT) from Yersinia pestis.